The following is a 248-amino-acid chain: PF03932 family protein CutC (248 aa).

The protein belongs to the CutC family. In terms of assembly, homodimer.

The protein localises to the cytoplasm. This chain is PF03932 family protein CutC, found in Escherichia coli (strain SMS-3-5 / SECEC).